Here is a 321-residue protein sequence, read N- to C-terminus: Glucokinase (321 aa).

8–13 (GDVGGT) is an ATP binding site.

Belongs to the bacterial glucokinase family.

It is found in the cytoplasm. The catalysed reaction is D-glucose + ATP = D-glucose 6-phosphate + ADP + H(+). This Escherichia coli (strain SMS-3-5 / SECEC) protein is Glucokinase.